The following is a 185-amino-acid chain: Large ribosomal subunit protein uL22 (185 aa).

Residues 157–185 are disordered; the sequence is VAAPSPEEDAPKKKQSKKKMARQKLMQRD. Residues 169-178 are compositionally biased toward basic residues; that stretch reads KKQSKKKMAR.

It belongs to the universal ribosomal protein uL22 family.

The protein is Large ribosomal subunit protein uL22 (RpL17) of Ixodes scapularis (Black-legged tick).